Reading from the N-terminus, the 503-residue chain is LEM domain-containing protein 2 (503 aa).

An N-acetylalanine modification is found at alanine 2. Residues 2-42 (AGLSDLELRRELQALGFQPGPITDTTRDVYRNKLRRLRGEA) form the LEM domain. The segment covering 42 to 74 (ARLRDEERLREEARPRGEERLREEARLREDAPL) has biased composition (basic and acidic residues). Disordered stretches follow at residues 42–97 (ARLR…SGSA) and 127–157 (AQLR…GPGL). A required for nuclear retention and interaction with LMNA isoform C region spans residues 74 to 130 (LRARPAAASPRAEPWLSQPASGSAYATPGAYGDIRPSAASWVGSRGLAYPARPAQLR). A compositionally biased stretch (low complexity) spans 75-87 (RARPAAASPRAEP). 2 positions are modified to phosphoserine: serine 166 and serine 175. The segment at 172 to 198 (LPSSLLGPDPRPGLRATRAGPAGAARA) is disordered. Residues 184 to 197 (GLRATRAGPAGAAR) are compositionally biased toward low complexity. 2 consecutive transmembrane segments (helical) span residues 213–233 (LLLW…WVKM) and 377–397 (VTNV…LILL). The winged-Helix (WH) stretch occupies residues 395–503 (ILLKYRWRKL…KPSSFSDSER (109 aa)). Phosphoserine is present on residues serine 497, serine 499, and serine 501.

As to quaternary structure, interacts (via N-terminus) with LMNA isoform C (via C-terminus) (in vitro). Interacts (via LEM domain) with BANF1. Interacts (via C-terminus) with CHMP7. Interacts (via N-terminus) with tubulin; the interaction causes microtubule bundling and stabilization (in vitro). Post-translationally, phosphorylated; strongly phosphorylated in mitosis compared to G1/S. Ubiquitously expressed, including bone marrow, brain, kidney, colon, skeletal muscle, thymus, testis and uterus.

It localises to the nucleus inner membrane. The protein localises to the nucleus envelope. Its subcellular location is the cytoplasm. It is found in the cytoskeleton. The protein resides in the spindle. In terms of biological role, nuclear lamina-associated inner nuclear membrane protein that is involved in nuclear structure organization, maintenance of nuclear envelope (NE) integrity and NE reformation after mitosis. Plays a role as transmembrane adapter for the endosomal sorting complexes required for transport (ESCRT), and is thereby involved in ESCRT-mediated NE reformation. Promotes ESCRT-mediated NE closure by recruiting CHMP7 and downstream ESCRT-III proteins IST1/CHMP8 and CHMP2A to the reforming NE during anaphase. During nuclear reassembly, condenses into a liquid-like coating around microtubule spindles and coassembles with CHMP7 to form a macromolecular O-ring seal at the confluence between membranes, chromatin, and the spindle to facilitate early nuclear sealing. Plays a role in the organization of heterochromatin associated with the NE and in the maintenance of NE organization under mechanical stress. Required for embryonic development and involved in regulation of several signaling pathways such as MAPK and AKT. Required for myoblast differentiation involving regulation of ERK signaling. Essential for cardiac homeostasis and proper heart function. The polypeptide is LEM domain-containing protein 2 (LEMD2) (Homo sapiens (Human)).